The chain runs to 244 residues: Ureidoacrylate amidohydrolase RutB (244 aa).

Catalysis depends on aspartate 38, which acts as the Proton acceptor. Residue lysine 147 is part of the active site. The Nucleophile role is filled by cysteine 180.

It belongs to the isochorismatase family. RutB subfamily.

The enzyme catalyses (Z)-3-ureidoacrylate + H2O + H(+) = (Z)-3-aminoacrylate + NH4(+) + CO2. It carries out the reaction (Z)-3-ureidoacrylate + H2O = (Z)-3-aminoacrylate + carbamate + H(+). It catalyses the reaction (Z)-2-methylureidoacrylate + H2O + H(+) = (Z)-2-methylaminoacrylate + NH4(+) + CO2. Its function is as follows. Hydrolyzes ureidoacrylate to form aminoacrylate and carbamate. The carbamate hydrolyzes spontaneously, thereby releasing one of the nitrogen atoms of the pyrimidine ring as ammonia and one of its carbon atoms as CO2. This is Ureidoacrylate amidohydrolase RutB from Shigella flexneri serotype X (strain 2002017).